The sequence spans 994 residues: Pre-mRNA-processing ATP-dependent RNA helicase PRP5 (994 aa).

The segment covering 1–18 (MTLPSGDSSITNNTNQTL) has biased composition (polar residues). 3 disordered regions span residues 1 to 105 (MTLP…SLEE), 170 to 190 (FVNE…EEEF), and 235 to 275 (SESF…EQEQ). 2 stretches are compositionally biased toward basic and acidic residues: residues 20–32 (EDEK…EKLA) and 70–79 (TTKRNEKQKV). The stretch at 20 to 87 (EDEKRRLRRE…KVENSFAKLN (68 aa)) forms a coiled coil. Polar residues predominate over residues 84 to 102 (AKLNSTSIDHSSTETQATS). Over residues 172–181 (NEDKEGGGGK) the composition is skewed to basic and acidic residues. 2 coiled-coil regions span residues 217–284 (VLEE…RYLA) and 310–382 (DDED…GKNV). Positions 235–245 (SESFVDNNNGG) are enriched in polar residues. The Q motif motif lies at 387–416 (LTWGQLLMPESVMSVIQNDLGFAKPSPIQC). The Helicase ATP-binding domain maps to 419-597 (IPIVLSGRDM…KKVLHNPIEI (179 aa)). 432–439 (AKTGSGKT) is an ATP binding site. Residues 545 to 548 (DEAD) carry the DEAD box motif. The Helicase C-terminal domain occupies 629–780 (KLEDILSRFF…AVDSKLQEIA (152 aa)). Residues 842-867 (YFGSSSSSSSFPSSSNTTTTTTTTST) are disordered. Residues 845–867 (SSSSSSSFPSSSNTTTTTTTTST) are compositionally biased toward low complexity.

It belongs to the DEAD box helicase family. DDX46/PRP5 subfamily.

It localises to the nucleus. It catalyses the reaction ATP + H2O = ADP + phosphate + H(+). Functionally, ATP-dependent RNA helicase involved spliceosome assembly and in nuclear splicing. Catalyzes an ATP-dependent conformational change of U2 snRNP. Bridges U1 and U2 snRNPs and enables stable U2 snRNP association with intron RNA. The chain is Pre-mRNA-processing ATP-dependent RNA helicase PRP5 (PRP5) from Lodderomyces elongisporus (strain ATCC 11503 / CBS 2605 / JCM 1781 / NBRC 1676 / NRRL YB-4239) (Yeast).